The primary structure comprises 161 residues: NAD(P)H-quinone oxidoreductase subunit I, chloroplastic (161 aa).

2 consecutive 4Fe-4S ferredoxin-type domains span residues 55-84 (GRIHFEFDKCIACEVCVRVCPIDLPVVDWK) and 95-124 (LNYSIDFGICIFCGNCIEYCPTNCLSMTEE). [4Fe-4S] cluster contacts are provided by Cys64, Cys67, Cys70, Cys74, Cys104, Cys107, Cys110, and Cys114.

Belongs to the complex I 23 kDa subunit family. NDH is composed of at least 16 different subunits, 5 of which are encoded in the nucleus. [4Fe-4S] cluster is required as a cofactor.

The protein resides in the plastid. It localises to the chloroplast thylakoid membrane. The catalysed reaction is a plastoquinone + NADH + (n+1) H(+)(in) = a plastoquinol + NAD(+) + n H(+)(out). It catalyses the reaction a plastoquinone + NADPH + (n+1) H(+)(in) = a plastoquinol + NADP(+) + n H(+)(out). Its function is as follows. NDH shuttles electrons from NAD(P)H:plastoquinone, via FMN and iron-sulfur (Fe-S) centers, to quinones in the photosynthetic chain and possibly in a chloroplast respiratory chain. The immediate electron acceptor for the enzyme in this species is believed to be plastoquinone. Couples the redox reaction to proton translocation, and thus conserves the redox energy in a proton gradient. The sequence is that of NAD(P)H-quinone oxidoreductase subunit I, chloroplastic from Lotus japonicus (Lotus corniculatus var. japonicus).